Consider the following 229-residue polypeptide: E3 ubiquitin ligase TRIM40 (229 aa).

Residues 14–57 (CPICQESLKEAVSTNCGHLFCRVCLTQHVEKASASGVFCCPLCR) form an RING-type zinc finger. A B box-type zinc finger spans residues 66–107 (GTGYICPNHQKRVCRFCEESRLLLCVECLVSPEHMSHHELTI). Residues Cys71, His74, Cys93, and His99 each coordinate Zn(2+). A coiled-coil region spans residues 107–154 (IENALSHYKERLNRRSRKLRKDIAELQRLKAQQEKKLQALQQWLGQLE).

Belongs to the TRIM/RBCC family. Interacts with NEDD8.

The catalysed reaction is S-ubiquitinyl-[E2 ubiquitin-conjugating enzyme]-L-cysteine + [acceptor protein]-L-lysine = [E2 ubiquitin-conjugating enzyme]-L-cysteine + N(6)-ubiquitinyl-[acceptor protein]-L-lysine.. E3 ubiquitin-protein ligase that plays a role in the limitation of the innate immune response. Mediates inhibition of the RLR signaling pathway by ubiquitinating RIGI and IFIH1 receptors, leading to their proteasomal degradation. Also promotes the neddylation of IKBKG/NEMO, stabilizing NFKBIA, and thereby inhibiting of NF-kappa-B nuclear translocation and activation. The polypeptide is E3 ubiquitin ligase TRIM40 (TRIM40) (Pan troglodytes (Chimpanzee)).